Consider the following 220-residue polypeptide: N-(5'-phosphoribosyl)anthranilate isomerase (220 aa).

The protein belongs to the TrpF family.

The enzyme catalyses N-(5-phospho-beta-D-ribosyl)anthranilate = 1-(2-carboxyphenylamino)-1-deoxy-D-ribulose 5-phosphate. It functions in the pathway amino-acid biosynthesis; L-tryptophan biosynthesis; L-tryptophan from chorismate: step 3/5. The protein is N-(5'-phosphoribosyl)anthranilate isomerase of Leptothrix cholodnii (strain ATCC 51168 / LMG 8142 / SP-6) (Leptothrix discophora (strain SP-6)).